A 280-amino-acid polypeptide reads, in one-letter code: MAIRKYKPTTPGRRQSSVSEFAEITRSTPEKSLLRPLSKTGGRNVHGHITTRHKGGGHKRRYRVIDFRRNDKDGVLAKVAHIEYDPNRTANIALLHYRDGEKRYIIAPRGLQQGALLESGPNADIKVGNNLPLRNIPTGTTIHAVELKPGGGAKMARSAGASIQLLGKEGKYAVLRMPSTEIRRVDIRCRATIGEVGNADQINIRWGKAGRMRWKGVRPTVRGVVMNPVDHPHGGGEGKTSGGRHPVSPWGQPEGRTRKPNRPSDRMIVRRRRSNKNKKR.

Disordered stretches follow at residues 1 to 59 and 223 to 280; these read MAIR…GGHK and GVVM…NKKR. Basic residues-rich tracts occupy residues 45–59 and 269–280; these read VHGH…GGHK and VRRRRSNKNKKR.

Belongs to the universal ribosomal protein uL2 family. In terms of assembly, part of the 50S ribosomal subunit. Forms a bridge to the 30S subunit in the 70S ribosome.

In terms of biological role, one of the primary rRNA binding proteins. Required for association of the 30S and 50S subunits to form the 70S ribosome, for tRNA binding and peptide bond formation. It has been suggested to have peptidyltransferase activity; this is somewhat controversial. Makes several contacts with the 16S rRNA in the 70S ribosome. The protein is Large ribosomal subunit protein uL2 of Corynebacterium jeikeium (strain K411).